Here is a 272-residue protein sequence, read N- to C-terminus: Ribosomal RNA small subunit methyltransferase A (272 aa).

S-adenosyl-L-methionine is bound by residues asparagine 20, leucine 22, glycine 47, glutamate 68, aspartate 93, and asparagine 114.

It belongs to the class I-like SAM-binding methyltransferase superfamily. rRNA adenine N(6)-methyltransferase family. RsmA subfamily.

Its subcellular location is the cytoplasm. It carries out the reaction adenosine(1518)/adenosine(1519) in 16S rRNA + 4 S-adenosyl-L-methionine = N(6)-dimethyladenosine(1518)/N(6)-dimethyladenosine(1519) in 16S rRNA + 4 S-adenosyl-L-homocysteine + 4 H(+). Functionally, specifically dimethylates two adjacent adenosines (A1518 and A1519) in the loop of a conserved hairpin near the 3'-end of 16S rRNA in the 30S particle. May play a critical role in biogenesis of 30S subunits. In Aliivibrio fischeri (strain ATCC 700601 / ES114) (Vibrio fischeri), this protein is Ribosomal RNA small subunit methyltransferase A.